The primary structure comprises 147 residues: Hemoglobin subunit beta (147 aa).

The residue at position 2 (V2) is an N-acetylvaline. Residues 3–147 (NLTSDEKTAV…VANALAHKYH (145 aa)) form the Globin domain. S45 bears the Phosphoserine mark. N6-acetyllysine is present on K60. H64 lines the heme b pocket. Residue K83 is modified to N6-acetyllysine. Position 93 (H93) interacts with heme b. Position 94 is an S-nitrosocysteine (C94). K145 is modified (N6-acetyllysine).

This sequence belongs to the globin family. As to quaternary structure, heterotetramer of two alpha chains and two beta chains. As to expression, red blood cells.

Involved in oxygen transport from the lung to the various peripheral tissues. The protein is Hemoglobin subunit beta (HBB) of Dasypus novemcinctus (Nine-banded armadillo).